Consider the following 49-residue polypeptide: Large ribosomal subunit protein uL16 (49 aa).

The protein belongs to the universal ribosomal protein uL16 family. In terms of assembly, part of the 50S ribosomal subunit.

Its function is as follows. Binds 23S rRNA and is also seen to make contacts with the A and possibly P site tRNAs. The protein is Large ribosomal subunit protein uL16 (rplP) of Aquifex pyrophilus.